A 283-amino-acid chain; its full sequence is Bifunctional protein FolD (283 aa).

NADP(+)-binding positions include 166–168 and I232; that span reads GAS.

Belongs to the tetrahydrofolate dehydrogenase/cyclohydrolase family. As to quaternary structure, homodimer.

The catalysed reaction is (6R)-5,10-methylene-5,6,7,8-tetrahydrofolate + NADP(+) = (6R)-5,10-methenyltetrahydrofolate + NADPH. It carries out the reaction (6R)-5,10-methenyltetrahydrofolate + H2O = (6R)-10-formyltetrahydrofolate + H(+). It participates in one-carbon metabolism; tetrahydrofolate interconversion. Functionally, catalyzes the oxidation of 5,10-methylenetetrahydrofolate to 5,10-methenyltetrahydrofolate and then the hydrolysis of 5,10-methenyltetrahydrofolate to 10-formyltetrahydrofolate. The chain is Bifunctional protein FolD from Hamiltonella defensa subsp. Acyrthosiphon pisum (strain 5AT).